The chain runs to 443 residues: ATP-dependent protease ATPase subunit HslU (443 aa).

ATP is bound by residues Ile-18, 60 to 65, Asp-256, Glu-321, and Arg-393; that span reads GVGKTE.

Belongs to the ClpX chaperone family. HslU subfamily. In terms of assembly, a double ring-shaped homohexamer of HslV is capped on each side by a ring-shaped HslU homohexamer. The assembly of the HslU/HslV complex is dependent on binding of ATP.

It localises to the cytoplasm. Functionally, ATPase subunit of a proteasome-like degradation complex; this subunit has chaperone activity. The binding of ATP and its subsequent hydrolysis by HslU are essential for unfolding of protein substrates subsequently hydrolyzed by HslV. HslU recognizes the N-terminal part of its protein substrates and unfolds these before they are guided to HslV for hydrolysis. The protein is ATP-dependent protease ATPase subunit HslU of Shigella boydii serotype 18 (strain CDC 3083-94 / BS512).